The sequence spans 153 residues: Transcriptional repressor NrdR (153 aa).

The segment at 3-34 (CPSCFHNGTRVLDSRPVDEGRSIRRRRECESC) is a zinc-finger region. Residues 49–139 (LIVVKKEGTR…VYRQFKDLNV (91 aa)) enclose the ATP-cone domain.

It belongs to the NrdR family. Zn(2+) is required as a cofactor.

Negatively regulates transcription of bacterial ribonucleotide reductase nrd genes and operons by binding to NrdR-boxes. This Bacillus cytotoxicus (strain DSM 22905 / CIP 110041 / 391-98 / NVH 391-98) protein is Transcriptional repressor NrdR.